A 512-amino-acid chain; its full sequence is Glutathione-binding protein GsiB (512 aa).

A signal peptide spans 1–26 (MARAVHRSGLVALGIVTALMASCAFA).

Belongs to the bacterial solute-binding protein 5 family. In terms of assembly, the complex is composed of two ATP-binding proteins (GsiA), two transmembrane proteins (GsiC and GsiD) and a solute-binding protein (GsiB).

The protein localises to the periplasm. Functionally, part of the ABC transporter complex GsiABCD involved in glutathione import. Binds glutathione. The sequence is that of Glutathione-binding protein GsiB from Shigella dysenteriae serotype 1 (strain Sd197).